The sequence spans 92 residues: Small ribosomal subunit protein bS20 (92 aa).

Belongs to the bacterial ribosomal protein bS20 family.

Binds directly to 16S ribosomal RNA. The polypeptide is Small ribosomal subunit protein bS20 (Rickettsia conorii (strain ATCC VR-613 / Malish 7)).